Here is a 251-residue protein sequence, read N- to C-terminus: uncharacterized protein (251 aa).

Asn-149, Asn-152, and Asn-207 each carry an N-linked (GlcNAc...) asparagine; by host glycan. Residues 226–246 traverse the membrane as a helical segment; sequence YLIFIIIIIIFIILILLWIKY.

The protein belongs to the glycosyltransferase 32 family.

The protein localises to the membrane. This is an uncharacterized protein from Acanthamoeba polyphaga (Amoeba).